Consider the following 103-residue polypeptide: Protein IQ-DOMAIN 20 (103 aa).

A calmodulin-binding region spans residues 10–22; that stretch reads VVRRKLLRRSQSR. 2 IQ domains span residues 36-62 and 63-87; these read EEIA…LKSL and VKLQ…CMHA.

Belongs to the IQD family. Interacts with calmodulin (CaM and CML) at the plasma membrane in a calcium ion Ca(2+)- independent manner, however, Ca(2+) seems to modulate calmodulin binding. Binds to multiple calmodulin (CaM) in the presence of Ca(2+) and CaM-like proteins.

The protein resides in the nucleus. Its subcellular location is the nucleolus. The protein localises to the cell membrane. Functionally, may be involved in cooperative interactions with calmodulins or calmodulin-like proteins. Recruits calmodulin proteins to microtubules, thus being a potential scaffold in cellular signaling and trafficking. May associate with nucleic acids and regulate gene expression at the transcriptional or post-transcriptional level. This Arabidopsis thaliana (Mouse-ear cress) protein is Protein IQ-DOMAIN 20.